Here is a 264-residue protein sequence, read N- to C-terminus: Thymidylate synthase (264 aa).

Arg21 provides a ligand contact to dUMP. A (6R)-5,10-methylene-5,6,7,8-tetrahydrofolate-binding site is contributed by His51. A dUMP-binding site is contributed by 126-127 (RR). Cys146 acts as the Nucleophile in catalysis. Residues 166 to 169 (RSCD), Asn177, and 207 to 209 (HLY) each bind dUMP. Asp169 contacts (6R)-5,10-methylene-5,6,7,8-tetrahydrofolate. Ala263 contacts (6R)-5,10-methylene-5,6,7,8-tetrahydrofolate.

The protein belongs to the thymidylate synthase family. Bacterial-type ThyA subfamily. Homodimer.

Its subcellular location is the cytoplasm. It carries out the reaction dUMP + (6R)-5,10-methylene-5,6,7,8-tetrahydrofolate = 7,8-dihydrofolate + dTMP. Its pathway is pyrimidine metabolism; dTTP biosynthesis. Catalyzes the reductive methylation of 2'-deoxyuridine-5'-monophosphate (dUMP) to 2'-deoxythymidine-5'-monophosphate (dTMP) while utilizing 5,10-methylenetetrahydrofolate (mTHF) as the methyl donor and reductant in the reaction, yielding dihydrofolate (DHF) as a by-product. This enzymatic reaction provides an intracellular de novo source of dTMP, an essential precursor for DNA biosynthesis. This Escherichia coli O9:H4 (strain HS) protein is Thymidylate synthase.